We begin with the raw amino-acid sequence, 108 residues long: Bublin coiled-coil protein (108 aa).

Disordered stretches follow at residues 1-23 (MSGP…DDDF) and 67-108 (RLEF…DEGS). Residues 25–73 (SEEYEAINSMLDQINSYLDDLEERNDSLNGKLHELMESNRQARLEFRAQ) are a coiled coil. The segment covering 99–108 (ENDKKIDEGS) has biased composition (basic and acidic residues).

The protein belongs to the UPF0184 (EST00098) family.

The protein localises to the cell junction. The protein resides in the cytoplasm. Its subcellular location is the cytoskeleton. In terms of biological role, essential for intermediate filament organization in intestinal cells, interacts with intermediate filament and regulates intestinal lumen morphology. This is Bublin coiled-coil protein (bbln) from Takifugu rubripes (Japanese pufferfish).